Here is a 205-residue protein sequence, read N- to C-terminus: Dihydrofolate reductase (205 aa).

One can recognise a DHFR domain in the interval 1–201; that stretch reads MLALVVALAS…TSFKMFLYTK (201 aa). NADP(+) contacts are provided by residues Ala7 and 13 to 19; that span reads GIGNANA. 29–34 is a binding site for substrate; that stretch reads DMAWFR. 62–64 is an NADP(+) binding site; sequence RRT. Arg78 is a binding site for substrate. NADP(+)-binding positions include 84-86 and 118-125; these read SRG and GGRDVYSL.

It belongs to the dihydrofolate reductase family.

The catalysed reaction is (6S)-5,6,7,8-tetrahydrofolate + NADP(+) = 7,8-dihydrofolate + NADPH + H(+). The protein operates within cofactor biosynthesis; tetrahydrofolate biosynthesis; 5,6,7,8-tetrahydrofolate from 7,8-dihydrofolate: step 1/1. Its function is as follows. Key enzyme in folate metabolism. Catalyzes an essential reaction for de novo glycine and purine synthesis, and for DNA precursor synthesis. In Encephalitozoon cuniculi (strain GB-M1) (Microsporidian parasite), this protein is Dihydrofolate reductase (DHFR-1).